A 437-amino-acid polypeptide reads, in one-letter code: GTP-binding protein ERG (437 aa).

The segment covering 39–50 (QPNLDEPTSINE) has biased composition (polar residues). The segment at 39–65 (QPNLDEPTSINEDGSSSDSVFDSSQYP) is disordered. Positions 51–62 (DGSSSDSVFDSS) are enriched in low complexity. Phosphoserine occurs at positions 111 and 112. Residues 152–333 (KSLNVGIIGP…LMDQAVKKPW (182 aa)) form the Era-type G domain. Positions 160–167 (GPPNAGKS) are G1. 160–167 (GPPNAGKS) is a GTP binding site. The G2 stretch occupies residues 186 to 190 (NTTTH). The interval 207–210 (DTPG) is G3. Residues 207 to 211 (DTPGL) and 279 to 282 (NKVD) contribute to the GTP site. The tract at residues 279 to 282 (NKVD) is G4. A G5 region spans residues 309–311 (ISG). One can recognise a KH type-2 domain in the interval 361–437 (VHQEIPYGLE…VHLILQVKLK (77 aa)).

The protein belongs to the TRAFAC class TrmE-Era-EngA-EngB-Septin-like GTPase superfamily. Era GTPase family.

Functionally, has a crucial role in plant growth and development, possibly by influencing mitochondrial division. The sequence is that of GTP-binding protein ERG (ERG) from Arabidopsis thaliana (Mouse-ear cress).